The following is a 357-amino-acid chain: Glutamine synthetase root isozyme B (357 aa).

The 81-residue stretch at 19–99 (IIAEYIWVGG…VICDVYTPAG (81 aa)) folds into the GS beta-grasp domain. In terms of domain architecture, GS catalytic spans 106-357 (KRYNAAKIFS…AETTILWKKS (252 aa)).

It belongs to the glutamine synthetase family. In terms of assembly, homooctamer.

Its subcellular location is the cytoplasm. The enzyme catalyses L-glutamate + NH4(+) + ATP = L-glutamine + ADP + phosphate + H(+). This chain is Glutamine synthetase root isozyme B (GS3B), found in Pisum sativum (Garden pea).